Here is a 325-residue protein sequence, read N- to C-terminus: Eukaryotic translation initiation factor 3 subunit I (325 aa).

WD repeat units follow at residues 1–39, 43–81, 87–127, 135–175, and 180–217; these read MKPILLQGHERSITQIKYNREGDLLFTVAKDPIVNVWYS, ERLGTYMGHTGAVWCVDADWDTKHVLTGSADNSCRLWDC, LALL…FFDL, NNEP…QYSA, and VLVNVKEHSRQINDIQLSRDMTMFVTASKDNTAKLFDS. The residue at position 219 (threonine 219) is a Phosphothreonine. 2 WD repeats span residues 221-267 and 275-316; these read EHQK…KFEA and EEEF…YFDP. Lysine 264 carries the N6-acetyllysine modification. Lysine 282 participates in a covalent cross-link: Glycyl lysine isopeptide (Lys-Gly) (interchain with G-Cter in ubiquitin). Tyrosine 308 carries the phosphotyrosine modification.

In terms of assembly, component of the eukaryotic translation initiation factor 3 (eIF-3) complex, which is composed of 13 subunits: EIF3A, EIF3B, EIF3C, EIF3D, EIF3E, EIF3F, EIF3G, EIF3H, EIF3I, EIF3J, EIF3K, EIF3L and EIF3M. The eIF-3 complex appears to include 3 stable modules: module A is composed of EIF3A, EIF3B, EIF3G and EIF3I; module B is composed of EIF3F, EIF3H, and EIF3M; and module C is composed of EIF3C, EIF3D, EIF3E, EIF3K and EIF3L. EIF3C of module C binds EIF3B of module A and EIF3H of module B, thereby linking the three modules. EIF3J is a labile subunit that binds to the eIF-3 complex via EIF3B. The eIF-3 complex interacts with RPS6KB1 under conditions of nutrient depletion. Mitogenic stimulation leads to binding and activation of a complex composed of MTOR and RPTOR, leading to phosphorylation and release of RPS6KB1 and binding of EIF4B to eIF-3. In terms of processing, phosphorylated by TGF-beta type II receptor.

The protein resides in the cytoplasm. Component of the eukaryotic translation initiation factor 3 (eIF-3) complex, which is required for several steps in the initiation of protein synthesis. The eIF-3 complex associates with the 40S ribosome and facilitates the recruitment of eIF-1, eIF-1A, eIF-2:GTP:methionyl-tRNAi and eIF-5 to form the 43S pre-initiation complex (43S PIC). The eIF-3 complex stimulates mRNA recruitment to the 43S PIC and scanning of the mRNA for AUG recognition. The eIF-3 complex is also required for disassembly and recycling of post-termination ribosomal complexes and subsequently prevents premature joining of the 40S and 60S ribosomal subunits prior to initiation. The eIF-3 complex specifically targets and initiates translation of a subset of mRNAs involved in cell proliferation, including cell cycling, differentiation and apoptosis, and uses different modes of RNA stem-loop binding to exert either translational activation or repression. This chain is Eukaryotic translation initiation factor 3 subunit I, found in Homo sapiens (Human).